The following is an 838-amino-acid chain: Axin-2 (838 aa).

The interval 1–75 (MSSAVLVTLL…EGRASPDSPL (75 aa)) is disordered. The Tankyrase-binding motif motif lies at 21–30 (APRPPVPGEE). The segment covering 42-55 (KVQSTKPMPVSSNA) has biased composition (polar residues). Residues 56–69 (RRNEDGLGEPEGRA) are compositionally biased toward basic and acidic residues. An RGS domain is found at 81-200 (SLHSLLGDQD…LTSDIYLEYV (120 aa)). Disordered stretches follow at residues 300 to 333 (SELSSDALTDDSMSMTDSSVDGIPPYRMGSKKQL), 398 to 435 (IREDEEKEGSEQALSSRDGAPVQHPLALLPSGSYEEDP), 450 to 483 (PGCQSPGVGRYSPRSRSPDHHHHHHQQCHALLPT), 568 to 682 (GSRG…AMPP), and 712 to 744 (VASQQRDRNHPATGQAGPTSFSNPSLASEDHKE). Residues 303–318 (SSDALTDDSMSMTDSS) show a composition bias toward low complexity. Residues 327–413 (MGSKKQLQRE…KEGSEQALSS (87 aa)) are interaction with GSK3B. The interval 413 to 476 (SRDGAPVQHP…PDHHHHHHQQ (64 aa)) is interaction with beta-catenin. Residues 727-737 (AGPTSFSNPSL) are compositionally biased toward polar residues. In terms of domain architecture, DIX spans 756–838 (ASELIVTYFF…RILGKVERID (83 aa)).

As to quaternary structure, interacts with SMAD7 and RNF111. Interacts with ANKRD6. Interacts with glycogen synthase kinase-3 beta (GSK3B) and beta-catenin. The interaction between axin and beta-catenin occurs via the armadillo repeats contained in beta-catenin. Interacts with SIAH1. Interacts with SIAH2. In terms of processing, ADP-ribosylated by tankyrase TNKS and TNKS2. Poly-ADP-ribosylated protein is recognized by RNF146, followed by ubiquitination and subsequent activation of the Wnt signaling pathway. Ubiquitinated by RNF146 when poly-ADP-ribosylated, leading to its degradation and subsequent activation of the Wnt signaling pathway. Deubiquitinated by USP34, deubiquitinated downstream of beta-catenin stabilization step: deubiquitination is important Wnt signaling to positively regulate beta-catenin (CTNBB1)-mediated transcription. Post-translationally, probably phosphorylated by GSK3B and dephosphorylated by PP2A. In terms of tissue distribution, expressed in lung and thymus.

The protein resides in the cytoplasm. Functionally, inhibitor of the Wnt signaling pathway. Down-regulates beta-catenin. Probably facilitate the phosphorylation of beta-catenin and APC by GSK3B. The chain is Axin-2 (Axin2) from Rattus norvegicus (Rat).